The sequence spans 291 residues: Probable L-ascorbate peroxidase 4, peroxisomal (291 aa).

His40 (proton acceptor) is an active-site residue. Position 160 (His160) interacts with heme b. Residues Thr161, Thr177, and Asp184 each coordinate K(+). Residues 263–283 (VLAQSAVGVAVAAAVVIVSYL) traverse the membrane as a helical segment.

This sequence belongs to the peroxidase family. Ascorbate peroxidase subfamily. Requires heme b as cofactor. As to expression, expressed in leaves, stems and flowers.

It localises to the peroxisome membrane. The enzyme catalyses L-ascorbate + H2O2 = L-dehydroascorbate + 2 H2O. In terms of biological role, plays a key role in hydrogen peroxide removal. This chain is Probable L-ascorbate peroxidase 4, peroxisomal, found in Oryza sativa subsp. japonica (Rice).